A 75-amino-acid chain; its full sequence is Putative DNA-directed RNA polymerase subunit omega (75 aa).

It belongs to the RNA polymerase subunit omega family.

The protein localises to the plastid. It localises to the chloroplast. The catalysed reaction is RNA(n) + a ribonucleoside 5'-triphosphate = RNA(n+1) + diphosphate. In terms of biological role, may be involved in RNA polymerase activity. The protein is Putative DNA-directed RNA polymerase subunit omega of Pyropia yezoensis (Susabi-nori).